The chain runs to 29 residues: Brevinin-2Rc (29 aa).

A disulfide bridge links Cys23 with Cys29.

As to expression, expressed by the skin glands.

The protein resides in the secreted. In terms of biological role, antimicrobial peptide. This Pelophylax ridibundus (Marsh frog) protein is Brevinin-2Rc.